We begin with the raw amino-acid sequence, 615 residues long: MTYRSCIPQNDLECYYNPNKTKYKSTNILSSIQHKIDKELTAYITDKTIDDTFGNRMIVFRDSFYDKPKNSKIFRQIIHMIETSNCWYSVKFLMDNGISSLFSLGITPHHTYPKKYYPMIISPILSLESKNDYQDYLALVRLKNFIGYSYDYITKYWNYKLSNKQNFINDVMEMESQLSLVTLTIEQQNNPFVIYNSLKWREFLEKYDVDNFWSSILGSYLKKEDYVIFDNIQYLSYLREYLKNTSKNSIKNYLVYSLVKKFGLYTDLLEFYNDIVIESINHDQIFLNMFSQYFGIYLETVFETRYHDKDKKEYITKMFYDMKLYLRNYFIECKFTDKTKREISLKIDNLHMVIGRQNYQYDLENFPLMGNDFYENVLNLERYYFHESIKLIGSTINKEWFSINGGMYSFEVNAYYDPICNVLYIPTSIINDMTISLERDDVYNYGSIGTILAHEIMHSLDNFGLQVNCDLSIGNKWDISDYKFYLSDLRKIIQHRIKLSNYDIASSIDALSEDISDTLGLKLSFKTYLSKFNKKIEPDNLSTNDKIHLQKFFYSWTETFKNINNNNQDDHSPSYIRINAPLAHLDEFYYLYGVESQHLNYLDPQLRSRILDKIN.

The region spanning 1–611 (MTYRSCIPQN…LDPQLRSRIL (611 aa)) is the Peptidase M13 domain. A Zn(2+)-binding site is contributed by His454. Residue Glu455 is part of the active site. His458 and Glu513 together coordinate Zn(2+). The Proton donor role is filled by Asp517.

Belongs to the peptidase M13 family. Zn(2+) is required as a cofactor.

Functionally, zinc metalloprotease. This chain is Zinc metalloproteinase R519, found in Acanthamoeba polyphaga (Amoeba).